A 336-amino-acid polypeptide reads, in one-letter code: Dihydroorotate dehydrogenase (quinone) (336 aa).

FMN-binding positions include 62–66 (AGLDK) and Thr-86. Residue Lys-66 coordinates substrate. 111-115 (NRMGF) serves as a coordination point for substrate. The FMN site is built by Asn-139 and Asn-172. Residue Asn-172 participates in substrate binding. Ser-175 functions as the Nucleophile in the catalytic mechanism. Asn-177 provides a ligand contact to substrate. Residues Lys-217 and Thr-245 each contribute to the FMN site. Residue 246 to 247 (NT) participates in substrate binding. Residues Gly-268, Gly-297, and 318–319 (YS) each bind FMN.

This sequence belongs to the dihydroorotate dehydrogenase family. Type 2 subfamily. As to quaternary structure, monomer. It depends on FMN as a cofactor.

Its subcellular location is the cell membrane. It carries out the reaction (S)-dihydroorotate + a quinone = orotate + a quinol. The protein operates within pyrimidine metabolism; UMP biosynthesis via de novo pathway; orotate from (S)-dihydroorotate (quinone route): step 1/1. Catalyzes the conversion of dihydroorotate to orotate with quinone as electron acceptor. The sequence is that of Dihydroorotate dehydrogenase (quinone) from Salmonella gallinarum (strain 287/91 / NCTC 13346).